We begin with the raw amino-acid sequence, 3184 residues long: WD repeat- and FYVE domain-containing protein 4 (3184 aa).

The span at 1 to 18 (MEAEDLSKAEDRNEDPGS) shows a compositional bias: basic and acidic residues. Disordered regions lie at residues 1 to 39 (MEAE…QSSS), 944 to 993 (SHTH…QDST), 1837 to 1869 (VGAE…KAHP), and 2309 to 2335 (ALSS…NQDE). Over residues 981–993 (QAPQPLGESQDST) the composition is skewed to polar residues. Basic and acidic residues predominate over residues 2314–2324 (RHKESQDKNDH). Residues 2385 to 2510 (LDKEKVTQKF…DRSKAFKSFC (126 aa)) enclose the BEACH-type PH domain. The 295-residue stretch at 2527 to 2821 (SLRRYPGSDR…QLFTKPHPAR (295 aa)) folds into the BEACH domain. WD repeat units follow at residues 2863–2922 (MYLF…YGSD), 2923–2972 (KVLM…PRGL), 2973–3014 (RLRQ…LDHL), 3015–3057 (THVT…GQPL), 3058–3141 (ASIT…ELDV), and 3142–3184 (SIAL…SADG). A disordered region spans residues 3107-3128 (SVPGRPAGEEPPAQPPSPRGHK).

In terms of assembly, interacts with HSP90AB1.

It is found in the early endosome. Its subcellular location is the endoplasmic reticulum. Plays a critical role in the regulation of cDC1-mediated cross-presentation of viral and tumor antigens in dendritic cells. Mechanistically, acts near the plasma membrane and interacts with endosomal membranes to promote endosomal-to-cytosol antigen trafficking. Also plays a role in B-cell survival through regulation of autophagy. The protein is WD repeat- and FYVE domain-containing protein 4 (WDFY4) of Homo sapiens (Human).